Here is a 409-residue protein sequence, read N- to C-terminus: Arginine deiminase (409 aa).

C399 serves as the catalytic Amidino-cysteine intermediate.

It belongs to the arginine deiminase family.

The protein localises to the cytoplasm. The catalysed reaction is L-arginine + H2O = L-citrulline + NH4(+). Its pathway is amino-acid degradation; L-arginine degradation via ADI pathway; carbamoyl phosphate from L-arginine: step 1/2. The chain is Arginine deiminase from Streptococcus pneumoniae serotype 19F (strain G54).